Here is a 379-residue protein sequence, read N- to C-terminus: Protein-glutamate methylesterase/protein-glutamine glutaminase (379 aa).

One can recognise a Response regulatory domain in the interval K4–L121. D55 carries the 4-aspartylphosphate modification. The 195-residue stretch at S185 to G379 folds into the CheB-type methylesterase domain. Catalysis depends on residues S197, H224, and D321.

It belongs to the CheB family. In terms of processing, phosphorylated by CheA. Phosphorylation of the N-terminal regulatory domain activates the methylesterase activity.

The protein resides in the cytoplasm. It carries out the reaction [protein]-L-glutamate 5-O-methyl ester + H2O = L-glutamyl-[protein] + methanol + H(+). The catalysed reaction is L-glutaminyl-[protein] + H2O = L-glutamyl-[protein] + NH4(+). In terms of biological role, involved in chemotaxis. Part of a chemotaxis signal transduction system that modulates chemotaxis in response to various stimuli. Catalyzes the demethylation of specific methylglutamate residues introduced into the chemoreceptors (methyl-accepting chemotaxis proteins or MCP) by CheR. Also mediates the irreversible deamidation of specific glutamine residues to glutamic acid. This is Protein-glutamate methylesterase/protein-glutamine glutaminase from Colwellia psychrerythraea (strain 34H / ATCC BAA-681) (Vibrio psychroerythus).